A 267-amino-acid chain; its full sequence is NAD kinase 1 (267 aa).

Residue D45 is the Proton acceptor of the active site. NAD(+) contacts are provided by residues 45-46 (DG), 122-123 (NE), R149, D151, and A186.

The protein belongs to the NAD kinase family. A divalent metal cation is required as a cofactor.

Its subcellular location is the cytoplasm. The enzyme catalyses NAD(+) + ATP = ADP + NADP(+) + H(+). Functionally, involved in the regulation of the intracellular balance of NAD and NADP, and is a key enzyme in the biosynthesis of NADP. Catalyzes specifically the phosphorylation on 2'-hydroxyl of the adenosine moiety of NAD to yield NADP. This Oceanobacillus iheyensis (strain DSM 14371 / CIP 107618 / JCM 11309 / KCTC 3954 / HTE831) protein is NAD kinase 1.